Here is a 210-residue protein sequence, read N- to C-terminus: Protein-methionine-sulfoxide reductase heme-binding subunit MsrQ (210 aa).

Helical transmembrane passes span 8 to 28 (LAVFLAACIAPVWWLYQAWIF), 37 to 57 (VLVENFGVATLVMLLITLSMT), 75 to 95 (LGLWCFAYALLHLSMYALFIL), 110 to 130 (PYIIVGALALLGLLALAVTSN), 147 to 167 (IIYVILGLGLLHMFWIVRADL), and 169 to 189 (EWALYAGIGAFLLLLRIPVFA).

This sequence belongs to the MsrQ family. In terms of assembly, heterodimer of a catalytic subunit (MsrP) and a heme-binding subunit (MsrQ). Requires FMN as cofactor. Heme b serves as cofactor.

The protein localises to the cell inner membrane. Part of the MsrPQ system that repairs oxidized periplasmic proteins containing methionine sulfoxide residues (Met-O), using respiratory chain electrons. Thus protects these proteins from oxidative-stress damage caused by reactive species of oxygen and chlorine generated by the host defense mechanisms. MsrPQ is essential for the maintenance of envelope integrity under bleach stress, rescuing a wide series of structurally unrelated periplasmic proteins from methionine oxidation. MsrQ provides electrons for reduction to the reductase catalytic subunit MsrP, using the quinone pool of the respiratory chain. This chain is Protein-methionine-sulfoxide reductase heme-binding subunit MsrQ, found in Pseudomonas syringae pv. syringae (strain B728a).